The following is a 134-amino-acid chain: MWSDPVADMLTRIRNANSVFKESVEIPASNLKKDILEIMKKEGFINDYKFIDDGKQGILKVYLKYKGTRRDKKPIMEGIIRVSKSGRRVYVNTRNIPKVKGGLGIAILSTSQGVMTDKEAREKKVGGEVICYVW.

Belongs to the universal ribosomal protein uS8 family. Part of the 30S ribosomal subunit. Contacts proteins S5 and S12.

One of the primary rRNA binding proteins, it binds directly to 16S rRNA central domain where it helps coordinate assembly of the platform of the 30S subunit. This chain is Small ribosomal subunit protein uS8, found in Petrotoga mobilis (strain DSM 10674 / SJ95).